Consider the following 278-residue polypeptide: ATPase SWSAP1 (278 aa).

Residues 237–278 are disordered; that stretch reads SPEKKDSSAGSQSLTLGCDNLPGPGSPLDGILTSETGADSKT. Over residues 269–278 the composition is skewed to polar residues; it reads TSETGADSKT.

As to quaternary structure, interacts with ZSWIM7; they form a functional complex involved in homologous recombination repair and stabilize each other. Interacts with RAD51, RAD51B, RAD51C, RAD51D and XRCC3; involved in homologous recombination repair.

The protein localises to the nucleus. Functionally, ATPase which is preferentially stimulated by single-stranded DNA and is involved in homologous recombination repair (HRR). Has a DNA-binding activity which is independent of its ATPase activity. This Mus musculus (Mouse) protein is ATPase SWSAP1 (Swsap1).